Here is a 542-residue protein sequence, read N- to C-terminus: Excitatory amino acid transporter 1 (542 aa).

Residues 1 to 47 (MTKSNGEEPKMGGRMERFQQGVRKRTLLAKKKVQNITKEDVKSYLFR) lie on the Cytoplasmic side of the membrane. The chain crosses the membrane as a helical span at residues 48–68 (NAFVLLTVTAVIVGTILGFTL). The Extracellular segment spans residues 69 to 86 (RPYRMSYREVKYFSFPGE). A helical membrane pass occupies residues 87-108 (LLMRMLQMLVLPLIISSLVTGM). The Cytoplasmic segment spans residues 109–122 (AALDSKASGKMGMR). Residues 123–145 (AVVYYMTTTIIAVVIGIIIVIII) form a helical membrane-spanning segment. Over 146-236 (HPGKGTKENM…ITEELVPVPG (91 aa)) the chain is Extracellular. Residues 237-260 (SVNGVNALGLVVFSMCFGFVIGNM) traverse the membrane as a helical segment. The Cytoplasmic portion of the chain corresponds to 261–269 (KEQGQALRE). A helical transmembrane segment spans residues 270-297 (FFDSLNEAIMRLVAVIMWYAPVGILFLI). Residues 298–318 (AGKIVEMEDMGVIGGQLAMYT) are Extracellular-facing. Residues 319–340 (VTVIVGLLIHAVIVLPLLYFLV) traverse the membrane as a helical segment. Residues 341-345 (TRKNP) are Cytoplasmic-facing. The segment at residues 346–376 (WVFIGGLLQALITALGTSSSSATLPITFKCL) is an intramembrane region (discontinuously helical). Position 363-365 (363-365 (SSS)) interacts with L-aspartate. The Cytoplasmic segment spans residues 377–385 (EENNGVDKR). The helical transmembrane segment at 386-412 (VTRFVLPVGATINMDGTALYEALAAIF) threads the bilayer. Positions 394, 396, and 398 each coordinate Na(+). Position 402 (Thr402) interacts with L-aspartate. Over 413–425 (IAQVNNFELNFGQ) the chain is Extracellular. The segment at residues 426-459 (IITISITATAASIGAAGIPQAGLVTMVIVLTSVG) is an intramembrane region (discontinuously helical). L-aspartate is bound at residue 443-447 (IPQAG). Residues 460–472 (LPTDDITLIIAVD) are Extracellular-facing. The helical transmembrane segment at 473–494 (WFLDRLRTTTNVLGDSLGAGIV) threads the bilayer. Residues Asp476 and Asn483 each contribute to the L-aspartate site. The Na(+) site is built by Asn483 and Asp487. The Cytoplasmic portion of the chain corresponds to 495 to 542 (EHLSRHELKNRDVEMGNSVIEENEMKKPYQLIAQDNETEKPIDSETKM). At Ser512 the chain carries Phosphoserine.

Belongs to the dicarboxylate/amino acid:cation symporter (DAACS) (TC 2.A.23) family. SLC1A3 subfamily. In terms of assembly, homotrimer. Post-translationally, glycosylated. As to expression, detected in brain. Detected at very much lower levels in heart, lung, placenta and skeletal muscle. Highly expressed in cerebellum, but also found in frontal cortex, hippocampus and basal ganglia.

It is found in the cell membrane. It catalyses the reaction K(+)(in) + L-glutamate(out) + 3 Na(+)(out) + H(+)(out) = K(+)(out) + L-glutamate(in) + 3 Na(+)(in) + H(+)(in). It carries out the reaction K(+)(in) + L-aspartate(out) + 3 Na(+)(out) + H(+)(out) = K(+)(out) + L-aspartate(in) + 3 Na(+)(in) + H(+)(in). The catalysed reaction is D-aspartate(out) + K(+)(in) + 3 Na(+)(out) + H(+)(out) = D-aspartate(in) + K(+)(out) + 3 Na(+)(in) + H(+)(in). Functionally, sodium-dependent, high-affinity amino acid transporter that mediates the uptake of L-glutamate and also L-aspartate and D-aspartate. Functions as a symporter that transports one amino acid molecule together with two or three Na(+) ions and one proton, in parallel with the counter-transport of one K(+) ion. Mediates Cl(-) flux that is not coupled to amino acid transport; this avoids the accumulation of negative charges due to aspartate and Na(+) symport. Plays a redundant role in the rapid removal of released glutamate from the synaptic cleft, which is essential for terminating the postsynaptic action of glutamate. The sequence is that of Excitatory amino acid transporter 1 from Homo sapiens (Human).